The following is a 422-amino-acid chain: Serine hydroxymethyltransferase (422 aa).

Residue 121–123 (GHI) participates in (6S)-5,6,7,8-tetrahydrofolate binding. At lysine 227 the chain carries N6-(pyridoxal phosphate)lysine. Position 245 (glutamate 245) interacts with (6S)-5,6,7,8-tetrahydrofolate.

Belongs to the SHMT family. As to quaternary structure, homodimer. Requires pyridoxal 5'-phosphate as cofactor.

It is found in the cytoplasm. It carries out the reaction 5,10-methylenetetrahydromethanopterin + glycine + H2O = 5,6,7,8-tetrahydromethanopterin + L-serine. It participates in amino-acid biosynthesis; glycine biosynthesis; glycine from L-serine: step 1/1. In terms of biological role, catalyzes the reversible interconversion of serine and glycine with tetrahydromethanopterin (H4MPT) serving as the one-carbon carrier. Also exhibits a pteridine-independent aldolase activity toward beta-hydroxyamino acids, producing glycine and aldehydes, via a retro-aldol mechanism. This is Serine hydroxymethyltransferase from Methanobrevibacter smithii (strain ATCC 35061 / DSM 861 / OCM 144 / PS).